The chain runs to 494 residues: MSGEATVLAYHAPEEQEGLLVVKVEEENYVLDQDFGLQENPWSQEVFRQKFRQFSYSDSTGPREALSRLRELCCQWLRPEVHSKEQILELLMLEQFLAILPEELQAWLREHRPENGEEAVTMLEELEKELEEPRQQDTTHGQEMFWQEMTSTGALKSLSLNSPVQPLENQCKTETQESQAFQERDGRMVAGKVLMAKQEIVECVASAAMISPGKLPGETHSQRIAEEALGGLDNSKKQKGNAAGNKISQLPSQDRHFSLATFNRRIPTEHSVLESHESEGSFSMNSNDITQQSVDTREKLYECFDCGKAFCQSSKLIRHQRIHTGERPYACKECGKAFSLSSDLVRHQRIHSGEKPYECCECGKAFRGSSELIRHRRIHTGEKPYECGECGKAFSRSSALIQHKKIHTGDKSYECIACGKAFGRSSILIEHQRIHTGEKPYECNECGKSFNQSSALTQHQRIHTGEKPYECSECRKTFRHRSGLMQHQRTHTRV.

The SCAN box domain occupies 48-130 (RQKFRQFSYS…TMLEELEKEL (83 aa)). Lys-197 is covalently cross-linked (Glycyl lysine isopeptide (Lys-Gly) (interchain with G-Cter in SUMO2)). C2H2-type zinc fingers lie at residues 301–323 (YECF…QRIH), 329–351 (YACK…QRIH), 357–379 (YECC…RRIH), 385–407 (YECG…KKIH), 413–435 (YECI…QRIH), 441–463 (YECN…QRIH), and 469–491 (YECS…QRTH).

This sequence belongs to the krueppel C2H2-type zinc-finger protein family.

The protein resides in the nucleus. May be involved in transcriptional regulation. The sequence is that of Zinc finger and SCAN domain-containing protein 30 (ZSCAN30) from Homo sapiens (Human).